The sequence spans 251 residues: Maleate isomerase (251 aa).

Residues asparagine 15, 81 to 83 (CLV), tyrosine 138, and asparagine 168 contribute to the substrate site. Cysteine 81 serves as the catalytic Nucleophile. Cysteine 81 carries the S-(2-succinyl)cysteine modification. Cysteine 199 (proton donor) is an active-site residue. Position 200-201 (200-201 (VQ)) interacts with substrate.

Belongs to the maleate isomerase family. Homodimer.

It carries out the reaction maleate = fumarate. In terms of biological role, catalyzes cis-trans isomerization of the C2-C3 double bond in maleate to yield fumarate. The chain is Maleate isomerase from Geobacillus stearothermophilus (Bacillus stearothermophilus).